The following is a 396-amino-acid chain: Small ribosomal subunit protein uS9m (396 aa).

The residue at position 287 (Lys-287) is an N6-acetyllysine. Residues 374–396 are disordered; that stretch reads PRVRERKKPGQEGARRKFTWKKR.

It belongs to the universal ribosomal protein uS9 family. Component of the mitochondrial small ribosomal subunit (mt-SSU). Mature mammalian 55S mitochondrial ribosomes consist of a small (28S) and a large (39S) subunit. The 28S small subunit contains a 12S ribosomal RNA (12S mt-rRNA) and 30 different proteins. The 39S large subunit contains a 16S rRNA (16S mt-rRNA), a copy of mitochondrial valine transfer RNA (mt-tRNA(Val)), which plays an integral structural role, and 52 different proteins.

The protein localises to the mitochondrion. This Homo sapiens (Human) protein is Small ribosomal subunit protein uS9m (MRPS9).